The sequence spans 99 residues: Putative pterin-4-alpha-carbinolamine dehydratase (99 aa).

It belongs to the pterin-4-alpha-carbinolamine dehydratase family.

The catalysed reaction is (4aS,6R)-4a-hydroxy-L-erythro-5,6,7,8-tetrahydrobiopterin = (6R)-L-erythro-6,7-dihydrobiopterin + H2O. This is Putative pterin-4-alpha-carbinolamine dehydratase from Saccharolobus islandicus (strain M.16.27) (Sulfolobus islandicus).